A 424-amino-acid polypeptide reads, in one-letter code: Serpin-Z2A (424 aa).

The tract at residues 370–394 is RCL; the sequence is GTEAAASTACTIRLLSMSYPEDFVA.

Belongs to the serpin family.

Functionally, probable serine protease inhibitor. This chain is Serpin-Z2A, found in Oryza sativa subsp. japonica (Rice).